A 140-amino-acid chain; its full sequence is ATP synthase epsilon chain (140 aa).

Belongs to the ATPase epsilon chain family. F-type ATPases have 2 components, CF(1) - the catalytic core - and CF(0) - the membrane proton channel. CF(1) has five subunits: alpha(3), beta(3), gamma(1), delta(1), epsilon(1). CF(0) has three main subunits: a, b and c.

The protein resides in the cell inner membrane. In terms of biological role, produces ATP from ADP in the presence of a proton gradient across the membrane. In Sodalis glossinidius (strain morsitans), this protein is ATP synthase epsilon chain.